We begin with the raw amino-acid sequence, 1245 residues long: ABC transporter B family member 13 (1245 aa).

Residues 1 to 14 show a composition bias toward polar residues; sequence MDNTERSSNGNIQA. Positions 1 to 20 are disordered; that stretch reads MDNTERSSNGNIQAETEAKE. Residues 47-336 form the ABC transmembrane type-1 1 domain; it reads MLLGGLGACI…AAPSLSAIAK (290 aa). A helical transmembrane segment spans residues 48 to 68; it reads LLGGLGACIHGATLPLFFVFF. N-linked (GlcNAc...) asparagine glycosylation is present at asparagine 77. 5 consecutive transmembrane segments (helical) span residues 94–114, 171–191, 195–215, 276–296, and 314–334; these read LYLV…VSCW, HVLR…LSVW, LLTL…AIVM, LGVG…LWYA, and ILNV…LSAI. Residues asparagine 351 and asparagine 391 are each glycosylated (N-linked (GlcNAc...) asparagine). The region spanning 372–607 is the ABC transporter 1 domain; that stretch reads IEFQKVSFAY…GGDYATLVNC (236 aa). 406–413 lines the ATP pocket; that stretch reads GPSGSGKS. Residues 610–629 are compositionally biased toward polar residues; that stretch reads TEPQENSRSIMSETCKSQAG. Residues 610 to 660 form a disordered region; the sequence is TEPQENSRSIMSETCKSQAGSSSSRRVSSSRRTSSFRVDQEKTKNDDSKKD. Low complexity predominate over residues 630–646; the sequence is SSSSRRVSSSRRTSSFR. The span at 647–660 shows a compositional bias: basic and acidic residues; sequence VDQEKTKNDDSKKD. The region spanning 681–969 is the ABC transmembrane type-1 2 domain; that stretch reads ALLGSIGAVL…TLALTPDIVK (289 aa). 2 helical membrane passes run 686 to 706 and 725 to 745; these read IGAV…AYVL and AIIF…QHYF. A glycan (N-linked (GlcNAc...) asparagine) is linked at asparagine 778. 4 consecutive transmembrane segments (helical) span residues 805-822, 828-848, 913-933, and 947-967; these read IVQN…AFFY, AVVT…QLFL, LSQF…SVLI, and FMVL…TPDI. The ABC transporter 2 domain occupies 1004-1240; that stretch reads IEFRNVSFVY…PNGFYKQLTS (237 aa). The N-linked (GlcNAc...) asparagine glycan is linked to asparagine 1008. 1039–1046 contributes to the ATP binding site; that stretch reads GPSGSGKS. N-linked (GlcNAc...) asparagine glycosylation is present at asparagine 1106.

It belongs to the ABC transporter superfamily. ABCB family. Multidrug resistance exporter (TC 3.A.1.201) subfamily.

The protein resides in the membrane. This is ABC transporter B family member 13 (ABCB13) from Arabidopsis thaliana (Mouse-ear cress).